The chain runs to 405 residues: G1/S-specific cyclin-D (405 aa).

A Cyclin N-terminal domain is found at 76 to 200 (FYNCMEYEEA…LIVTTLQWET (125 aa)). Residues 301–405 (YTSEDAEKTE…STPPKIFKTL (105 aa)) are disordered. The segment covering 311–321 (PTPSAPASTQE) has biased composition (polar residues). A compositionally biased stretch (basic and acidic residues) spans 326 to 335 (QELKELKEEP). The span at 358–380 (SEQTPSTPLNDSGFSSDVSSPAS) shows a compositional bias: polar residues.

This sequence belongs to the cyclin family. Cyclin D subfamily. In terms of assembly, interacts with cdk-4; the interaction is likely involved in regulating cdk-4 activity.

In terms of biological role, in association with cdk-4, regulates the progression through the G1 phase of the cell cycle during postembryonic development. Regulates proliferation of the coelomocyte lineage and intestinal cells during late embryogenesis. In complex with cdk-4, involved in sex determination during gonadogenesis by regulating the asymmetric division of the somatic gonadal precursor cell (SGP). In Caenorhabditis elegans, this protein is G1/S-specific cyclin-D.